The chain runs to 201 residues: Elongation factor Ts (201 aa).

Positions 83–86 are involved in Mg(2+) ion dislocation from EF-Tu; sequence TDFV.

Belongs to the EF-Ts family.

It is found in the cytoplasm. Associates with the EF-Tu.GDP complex and induces the exchange of GDP to GTP. It remains bound to the aminoacyl-tRNA.EF-Tu.GTP complex up to the GTP hydrolysis stage on the ribosome. This is Elongation factor Ts from Methylacidiphilum infernorum (isolate V4) (Methylokorus infernorum (strain V4)).